We begin with the raw amino-acid sequence, 518 residues long: MQTGFSNSRMNSFISSVLVLHFNKQEIKFEPSVWCEAIDIHNTFSAGEIITGDIICFQKILKPPDIPKYPSVASFLQHVCDRKTYEEVRKVHILEEEIVTLKHQADTYLVQKEKAVTAYDQLKHERDNAVQQVNELRDQSTHIILDFSRKDMEQATEHFKNAREVGDTEYGHTYKGMIHNMKVLIKLSSSQKLFQQEVSILRQWRHPNIITFIGVCSEVSALVYEWLPNGNLEDRIICTNNSAPLSWYNRTQIIGEICCALLFLHSNKSTALVHGDLRPCNILIDANYRSKICNFGMSNLFLQLGTFPPNLTARLPYMDPEFNTTGELTTLSDVYSLGVIILRLLTGMPPLTLSEKVAEALGSDSLHLLIDKSAGDWPYIEAKQLALIGLSCTGMTRKKRPDLLNEVWIVIEPLTRKPPAATWPYLQSASGDSSVPAAFICPISMEIMKDPQVASDGFTYEAEAIRCWFDRGISRSPMTNLALPNLNLVPNRVLRSFIHGYLQQQQPNPAYQQQLSET.

Residues 86–142 (EEVRKVHILEEEIVTLKHQADTYLVQKEKAVTAYDQLKHERDNAVQQVNELRDQSTH) are a coiled coil. One can recognise a Protein kinase domain in the interval 159-409 (FKNAREVGDT…RPDLLNEVWI (251 aa)). Positions 434-508 (SVPAAFICPI…HGYLQQQQPN (75 aa)) constitute a U-box domain.

It carries out the reaction S-ubiquitinyl-[E2 ubiquitin-conjugating enzyme]-L-cysteine + [acceptor protein]-L-lysine = [E2 ubiquitin-conjugating enzyme]-L-cysteine + N(6)-ubiquitinyl-[acceptor protein]-L-lysine.. Its pathway is protein modification; protein ubiquitination. Its function is as follows. Possesses E3 ubiquitin-protein ligase in vitro. May be involved in cell death signaling. This Oryza sativa subsp. japonica (Rice) protein is U-box domain-containing protein 57 (PUB57).